The sequence spans 199 residues: GTP-binding protein Di-Ras2 (199 aa).

GTP is bound by residues 14 to 21 (GAGGVGKS), 33 to 39 (RESYIPT), 61 to 65 (DTTGS), and 121 to 124 (NKCD). Ser-35 carries the post-translational modification Phosphoserine. The short motif at 36-44 (YIPTVEDTY) is the Effector region element. Position 126 is a phosphoserine (Ser-126). Residue 152-153 (AK) coordinates GTP. A Cysteine methyl ester modification is found at Cys-196. Cys-196 carries the S-geranylgeranyl cysteine lipid modification. A propeptide spans 197-199 (VVM) (removed in mature form).

This sequence belongs to the small GTPase superfamily. Di-Ras family. In terms of processing, ubiquitinated by the ECS(ASB11) complex via 'Lys-11'-linked ubiquitin chains, leading to its degradation by the proteasome.

It localises to the cell membrane. The enzyme catalyses GTP + H2O = GDP + phosphate + H(+). In terms of biological role, displays low GTPase activity and exists predominantly in the GTP-bound form. The protein is GTP-binding protein Di-Ras2 (Diras2) of Mus musculus (Mouse).